Reading from the N-terminus, the 165-residue chain is Pyruvoyl-dependent arginine decarboxylase 1 (165 aa).

Serine 45 bears the Pyruvic acid (Ser) mark.

It belongs to the PdaD family. Pyruvate is required as a cofactor.

It catalyses the reaction L-arginine + H(+) = agmatine + CO2. This chain is Pyruvoyl-dependent arginine decarboxylase 1 (pdaD1), found in Methanosarcina acetivorans (strain ATCC 35395 / DSM 2834 / JCM 12185 / C2A).